Here is a 194-residue protein sequence, read N- to C-terminus: Peptidyl-tRNA hydrolase (194 aa).

Y17 provides a ligand contact to tRNA. Residue H22 is the Proton acceptor of the active site. TRNA is bound by residues Y68, N70, and N115.

Belongs to the PTH family. As to quaternary structure, monomer.

Its subcellular location is the cytoplasm. The enzyme catalyses an N-acyl-L-alpha-aminoacyl-tRNA + H2O = an N-acyl-L-amino acid + a tRNA + H(+). Functionally, hydrolyzes ribosome-free peptidyl-tRNAs (with 1 or more amino acids incorporated), which drop off the ribosome during protein synthesis, or as a result of ribosome stalling. Catalyzes the release of premature peptidyl moieties from peptidyl-tRNA molecules trapped in stalled 50S ribosomal subunits, and thus maintains levels of free tRNAs and 50S ribosomes. This is Peptidyl-tRNA hydrolase from Pseudoalteromonas atlantica (strain T6c / ATCC BAA-1087).